Here is a 245-residue protein sequence, read N- to C-terminus: Ribonuclease PH (245 aa).

Phosphate contacts are provided by residues Arg93 and 131-133 (GTR).

It belongs to the RNase PH family. As to quaternary structure, homohexameric ring arranged as a trimer of dimers.

The enzyme catalyses tRNA(n+1) + phosphate = tRNA(n) + a ribonucleoside 5'-diphosphate. In terms of biological role, phosphorolytic 3'-5' exoribonuclease that plays an important role in tRNA 3'-end maturation. Removes nucleotide residues following the 3'-CCA terminus of tRNAs; can also add nucleotides to the ends of RNA molecules by using nucleoside diphosphates as substrates, but this may not be physiologically important. Probably plays a role in initiation of 16S rRNA degradation (leading to ribosome degradation) during starvation. This Corynebacterium efficiens (strain DSM 44549 / YS-314 / AJ 12310 / JCM 11189 / NBRC 100395) protein is Ribonuclease PH.